The following is a 247-amino-acid chain: Mycofactocin precursor peptide peptidase (247 aa).

A divalent metal cation is bound by residues Glu38, His40, Asp49, His124, and Glu163.

Belongs to the creatininase superfamily. As to quaternary structure, homooctamer. It depends on Fe(2+) as a cofactor. The cofactor is Zn(2+).

The catalysed reaction is [mycofactocin precursor peptide]-C-terminal glycyl-N-{5-[(4-hydroxyphenyl)methyl]-4,4-dimethyl-2-oxopyrrolidin-3-yl}acetamide + H2O = [mycofactocin precursor peptide]-C-terminal glycine + 3-amino-5-[(4-hydroxyphenyl)methyl]-4,4-dimethyl-2-pyrrolidin-2-one. In terms of biological role, peptidase involved in the biosynthesis of the enzyme cofactor mycofactocin (MFT). Catalyzes cleavage of the MftC-modified MftA peptide to liberate its final two residues, which consist of a cross-linked valine-decarboxylated tyrosine dipeptide (named 3-amino-5-[(4-hydroxyphenyl)methyl]-4,4-dimethyl-2-pyrrolidin-2-one or ADHP). Is required for the in vivo ethanol assimilation in M.smegmatis. In Mycolicibacterium smegmatis (strain ATCC 700084 / mc(2)155) (Mycobacterium smegmatis), this protein is Mycofactocin precursor peptide peptidase.